A 601-amino-acid chain; its full sequence is Glutathione-regulated potassium-efflux system protein KefB (601 aa).

13 helical membrane-spanning segments follow: residues 4 to 24, 29 to 49, 55 to 75, 87 to 107, 111 to 131, 152 to 172, 177 to 197, 207 to 227, 230 to 250, 262 to 282, 284 to 304, 324 to 344, and 356 to 376; these read ADLL…VPLA, IGAV…GLGF, EILH…GLEL, IFGV…GLLM, FLWQ…TAMA, VLLF…LLAG, HFDW…LIGG, FIAA…LVLS, LFMD…GVLL, AIDP…GMSL, LGVL…LVVI, MQFA…FSTA, and ALLL…MKGI. One can recognise an RCK N-terminal domain in the interval 400–519; that stretch reads KPQVIVVGFG…AGVTQFSRET (120 aa).

Belongs to the monovalent cation:proton antiporter 2 (CPA2) transporter (TC 2.A.37) family. KefB subfamily. As to quaternary structure, interacts with the regulatory subunit KefG.

The protein localises to the cell inner membrane. Pore-forming subunit of a potassium efflux system that confers protection against electrophiles. Catalyzes K(+)/H(+) antiport. This Salmonella heidelberg (strain SL476) protein is Glutathione-regulated potassium-efflux system protein KefB.